A 342-amino-acid polypeptide reads, in one-letter code: Foldase protein PrsA (342 aa).

Residues 1 to 22 (MVSVKKIVASALVGVLMFSAVG) form the signal peptide. A lipid anchor (N-palmitoyl cysteine) is attached at cysteine 23. A lipid anchor (S-diacylglycerol cysteine) is attached at cysteine 23. Residues 189 to 284 (DSGVLTKHLL…FGYHIIQAGA (96 aa)) enclose the PpiC domain.

The protein belongs to the PrsA family.

It is found in the cell membrane. The enzyme catalyses [protein]-peptidylproline (omega=180) = [protein]-peptidylproline (omega=0). In terms of biological role, plays a major role in protein secretion by helping the post-translocational extracellular folding of several secreted proteins. The polypeptide is Foldase protein PrsA (Clostridium perfringens (strain ATCC 13124 / DSM 756 / JCM 1290 / NCIMB 6125 / NCTC 8237 / Type A)).